The chain runs to 433 residues: Chaperone SurA (433 aa).

The first 24 residues, 1-24, serve as a signal peptide directing secretion; that stretch reads MKYRIKALLLASSLIITTITSVQA. 2 consecutive PpiC domains span residues 175-276 and 285-384; these read NVEY…KVLD and VEEV…KLED.

Its subcellular location is the periplasm. The catalysed reaction is [protein]-peptidylproline (omega=180) = [protein]-peptidylproline (omega=0). Functionally, chaperone involved in the correct folding and assembly of outer membrane proteins. Recognizes specific patterns of aromatic residues and the orientation of their side chains, which are found more frequently in integral outer membrane proteins. May act in both early periplasmic and late outer membrane-associated steps of protein maturation. The polypeptide is Chaperone SurA (Colwellia psychrerythraea (strain 34H / ATCC BAA-681) (Vibrio psychroerythus)).